Reading from the N-terminus, the 89-residue chain is Large ribosomal subunit protein bL27 (89 aa).

Positions 1-21 (MAHKKSGGSSRNGRDSNPKYL) are disordered.

The protein belongs to the bacterial ribosomal protein bL27 family.

The polypeptide is Large ribosomal subunit protein bL27 (Hyphomonas neptunium (strain ATCC 15444)).